We begin with the raw amino-acid sequence, 382 residues long: Galactokinase (382 aa).

34–37 serves as a coordination point for substrate; it reads EHTD. 124–130 serves as a coordination point for ATP; that stretch reads GAGLSSS. Residues serine 130 and glutamate 162 each contribute to the Mg(2+) site. Aspartate 174 acts as the Proton acceptor in catalysis. A substrate-binding site is contributed by tyrosine 223.

It belongs to the GHMP kinase family. GalK subfamily.

The protein localises to the cytoplasm. It catalyses the reaction alpha-D-galactose + ATP = alpha-D-galactose 1-phosphate + ADP + H(+). The protein operates within carbohydrate metabolism; galactose metabolism. Catalyzes the transfer of the gamma-phosphate of ATP to D-galactose to form alpha-D-galactose-1-phosphate (Gal-1-P). In Shigella flexneri serotype 5b (strain 8401), this protein is Galactokinase.